Here is a 349-residue protein sequence, read N- to C-terminus: Short-wave-sensitive opsin 1 (349 aa).

Residues 1–34 are Extracellular-facing; sequence MSKMSEEEEFLLFKNISLVGPWDGPQYHLAPVWA. A glycan (N-linked (GlcNAc...) asparagine) is linked at asparagine 15. A helical membrane pass occupies residues 35–59; sequence FHLQAVFMGFVFFVGTPLNATVLVA. The Cytoplasmic segment spans residues 60 to 71; that stretch reads TLRYRKLRQPLN. Residues 72–97 traverse the membrane as a helical segment; sequence YILVNVSLGGFIYCIFSVFIVFITSC. Residues 98 to 111 lie on the Extracellular side of the membrane; the sequence is YGYFVFGRHVCALE. Cysteine 108 and cysteine 185 are joined by a disulfide. A helical membrane pass occupies residues 112 to 131; it reads AFLGCTAGLVTGWSLAFLAF. Residues 132–150 lie on the Cytoplasmic side of the membrane; that stretch reads ERYIIICKPFGNFRFSSKH. A helical transmembrane segment spans residues 151-174; it reads ALMVVVATWTIGIGVSIPPFFGWS. The Extracellular segment spans residues 175 to 200; sequence RFVPEGLQCSCGPDWYTVGTKYYSEY. Residues 201-228 form a helical membrane-spanning segment; that stretch reads YTWFLFIFCYIVPLSLICFSYSQLLGAL. Topologically, residues 229–250 are cytoplasmic; sequence RAVAAQQQESASTQKAEREVSH. Residues 251–274 form a helical membrane-spanning segment; it reads MVVVMVGSFCLCYTPYAALAMYIV. Residues 275–282 lie on the Extracellular side of the membrane; the sequence is NNRNHGVD. The chain crosses the membrane as a helical span at residues 283-307; sequence LRLVTIPAFFSKSACVYNPIIYCFM. At lysine 294 the chain carries N6-(retinylidene)lysine. At 308–349 the chain is on the cytoplasmic side; the sequence is NKQFRACIMEMVCGKPMTDESELSSSQKTEVSTVSSSQVGPN. Residues 327 to 349 are disordered; sequence ESELSSSQKTEVSTVSSSQVGPN. The segment covering 330–349 has biased composition (polar residues); sequence LSSSQKTEVSTVSSSQVGPN.

The protein belongs to the G-protein coupled receptor 1 family. Opsin subfamily. Post-translationally, phosphorylated on some or all of the serine and threonine residues present in the C-terminal region.

The protein resides in the cell membrane. The protein localises to the photoreceptor inner segment. Its subcellular location is the cell projection. It localises to the cilium. It is found in the photoreceptor outer segment. The protein resides in the cytoplasm. The protein localises to the perinuclear region. Visual pigments are the light-absorbing molecules that mediate vision. They consist of an apoprotein, opsin, covalently linked to cis-retinal. Required for the maintenance of cone outer segment organization in the ventral retina, but not essential for the maintenance of functioning cone photoreceptors. Involved in ensuring correct abundance and localization of retinal membrane proteins. May increase spectral sensitivity in dim light. The sequence is that of Short-wave-sensitive opsin 1 (OPN1SW) from Bos taurus (Bovine).